The chain runs to 630 residues: MRKWRIEDSEELYNITGWGTSYFSINDAGHVVVTPRRDGVTVDLKELVDELQLRDVASPMLLRFPDILDNRIEKMSSCFKQAAEEYGYKAENFIIYPIKVNQMRPVVEEIISHGKKFNLGLEAGSKPELHAVIAVNTDSDSLIVCNGYKDESYIELALLAQKMGKRIFLVVEKMNELKLIAKMAKQLNVQPNIGIRIKLASSGSGKWEESGGDASKFGLTSSELLEALDFMESKGLKDCLKLIHFHIGSQVTKIRRIKTALREASQFYVQLHSMGFNVEFVDIGGGLGVDYDGTRSSNSEGSVNYSIQEYVNDSISTLVDVSDKNGIPHPNIITESGRALTAHHSVLIFEVLETATLPEWDDEEEIAPDAHELVQELYSIWDSLNQNKMLEAWHDAQQIREEALDLFSHGIVDLKTRAQIERLYWSITREINQIAGGLKHAPDEFRGLSKLLADKYFCNFSLFQSLPDSWAIDQIFPIMPIQRLDEKPERSATLQDITCDSDGKIANFISTRNVAHYLPVHSLKKTEPYYLAVFLVGAYQEILGDMHNLFGDTNAVHVSVNEKGYNIEQIIDGETVAEVLDYVQYNPKKLVRTLETWVTKSVKEGKISLEEGKEFLSNYRSGLYGYTYLE.

The residue at position 99 (Lys-99) is an N6-(pyridoxal phosphate)lysine. 281 to 291 contributes to the substrate binding site; the sequence is VDIGGGLGVDY.

Belongs to the Orn/Lys/Arg decarboxylase class-II family. SpeA subfamily. It depends on Mg(2+) as a cofactor. Pyridoxal 5'-phosphate serves as cofactor.

It catalyses the reaction L-arginine + H(+) = agmatine + CO2. Its function is as follows. Catalyzes the biosynthesis of agmatine from arginine. This is Biosynthetic arginine decarboxylase from Bacteroides thetaiotaomicron (strain ATCC 29148 / DSM 2079 / JCM 5827 / CCUG 10774 / NCTC 10582 / VPI-5482 / E50).